The chain runs to 120 residues: Phosphoribosyl-AMP cyclohydrolase (120 aa).

Residue D75 coordinates Mg(2+). C76 provides a ligand contact to Zn(2+). Mg(2+) contacts are provided by D77 and D79. Zn(2+)-binding residues include C92 and C99.

It belongs to the PRA-CH family. Homodimer. Mg(2+) is required as a cofactor. Requires Zn(2+) as cofactor.

Its subcellular location is the cytoplasm. It catalyses the reaction 1-(5-phospho-beta-D-ribosyl)-5'-AMP + H2O = 1-(5-phospho-beta-D-ribosyl)-5-[(5-phospho-beta-D-ribosylamino)methylideneamino]imidazole-4-carboxamide. The protein operates within amino-acid biosynthesis; L-histidine biosynthesis; L-histidine from 5-phospho-alpha-D-ribose 1-diphosphate: step 3/9. Catalyzes the hydrolysis of the adenine ring of phosphoribosyl-AMP. The chain is Phosphoribosyl-AMP cyclohydrolase from Methanosarcina mazei (strain ATCC BAA-159 / DSM 3647 / Goe1 / Go1 / JCM 11833 / OCM 88) (Methanosarcina frisia).